Reading from the N-terminus, the 218-residue chain is Large ribosomal subunit protein uL3 (218 aa).

Position 154 is an N5-methylglutamine (Q154).

This sequence belongs to the universal ribosomal protein uL3 family. In terms of assembly, part of the 50S ribosomal subunit. Forms a cluster with proteins L14 and L19. Methylated by PrmB.

In terms of biological role, one of the primary rRNA binding proteins, it binds directly near the 3'-end of the 23S rRNA, where it nucleates assembly of the 50S subunit. This chain is Large ribosomal subunit protein uL3, found in Polynucleobacter asymbioticus (strain DSM 18221 / CIP 109841 / QLW-P1DMWA-1) (Polynucleobacter necessarius subsp. asymbioticus).